We begin with the raw amino-acid sequence, 216 residues long: Probable nicotinate-nucleotide adenylyltransferase (216 aa).

The protein belongs to the NadD family.

It carries out the reaction nicotinate beta-D-ribonucleotide + ATP + H(+) = deamido-NAD(+) + diphosphate. It participates in cofactor biosynthesis; NAD(+) biosynthesis; deamido-NAD(+) from nicotinate D-ribonucleotide: step 1/1. Catalyzes the reversible adenylation of nicotinate mononucleotide (NaMN) to nicotinic acid adenine dinucleotide (NaAD). The polypeptide is Probable nicotinate-nucleotide adenylyltransferase (Geotalea daltonii (strain DSM 22248 / JCM 15807 / FRC-32) (Geobacter daltonii)).